Here is a 275-residue protein sequence, read N- to C-terminus: Elongation factor Ts (275 aa).

Positions 76 to 79 are involved in Mg(2+) ion dislocation from EF-Tu; sequence TDFV.

This sequence belongs to the EF-Ts family.

Its subcellular location is the cytoplasm. Associates with the EF-Tu.GDP complex and induces the exchange of GDP to GTP. It remains bound to the aminoacyl-tRNA.EF-Tu.GTP complex up to the GTP hydrolysis stage on the ribosome. This is Elongation factor Ts from Corynebacterium glutamicum (strain R).